The following is a 601-amino-acid chain: Sestrin homolog (601 aa).

Over residues 1–11 the composition is skewed to polar residues; that stretch reads MISMGMTSKGQ. Residues 1-58 are disordered; it reads MISMGMTSKGQNVDGAPAGNSSSEWIISSSSSPFQANKRYSLDPPFGSDYSPPASPQN. Asparagine 20 carries N-linked (GlcNAc...) asparagine glycosylation. Residues 21–32 are compositionally biased toward low complexity; sequence SSSEWIISSSSS. 2 N-linked (GlcNAc...) asparagine glycosylation sites follow: asparagine 322 and asparagine 330. The interval 355–425 is disordered; it reads RRSQQQDDDD…DSSSSTLSQS (71 aa). Positions 368–379 are enriched in basic and acidic residues; it reads LHDRQQDFHNAG. Over residues 380–425 the composition is skewed to low complexity; it reads DDSQSSNNNTTTTTTTTTTTTTTTNTNTTSNSAGGGDSSSSTLSQS. N-linked (GlcNAc...) asparagine glycosylation is found at asparagine 387, asparagine 388, asparagine 406, asparagine 438, and asparagine 499.

Belongs to the sestrin family.

The protein localises to the nucleus. It localises to the cytoplasm. In terms of biological role, may function as a negative feedback regulator of TOR function. In Dictyostelium discoideum (Social amoeba), this protein is Sestrin homolog.